A 250-amino-acid polypeptide reads, in one-letter code: Cyclin-Q (250 aa).

An N-acetylmethionine modification is found at M1. The span at 1–10 (MEAVRPDSCE) shows a compositional bias: basic and acidic residues. The disordered stretch occupies residues 1–22 (MEAVRPDSCERGTAAARAEERP).

This sequence belongs to the cyclin family. Cyclin-like FAM58 subfamily. As to quaternary structure, associates with CDK10 to promote its kinase activity.

Its function is as follows. Activating cyclin for the cyclin-associated kinase CDK10. This Rattus norvegicus (Rat) protein is Cyclin-Q (Ccnq).